A 285-amino-acid chain; its full sequence is Dermonecrotic toxin LiSicTox-alphaIA2aii (285 aa).

The propeptide occupies 1–5 (DVEER). The active site involves histidine 17. Mg(2+) contacts are provided by glutamate 37 and aspartate 39. The active-site Nucleophile is the histidine 53. 2 disulfides stabilise this stretch: cysteine 57–cysteine 63 and cysteine 59–cysteine 202. Aspartate 97 contributes to the Mg(2+) binding site. Asparagine 262 is a glycosylation site (N-linked (GlcNAc...) asparagine).

This sequence belongs to the arthropod phospholipase D family. Class II subfamily. Class IIa sub-subfamily. Mg(2+) serves as cofactor. Expressed by the venom gland.

The protein resides in the secreted. The catalysed reaction is an N-(acyl)-sphingosylphosphocholine = an N-(acyl)-sphingosyl-1,3-cyclic phosphate + choline. It catalyses the reaction an N-(acyl)-sphingosylphosphoethanolamine = an N-(acyl)-sphingosyl-1,3-cyclic phosphate + ethanolamine. The enzyme catalyses a 1-acyl-sn-glycero-3-phosphocholine = a 1-acyl-sn-glycero-2,3-cyclic phosphate + choline. It carries out the reaction a 1-acyl-sn-glycero-3-phosphoethanolamine = a 1-acyl-sn-glycero-2,3-cyclic phosphate + ethanolamine. Its function is as follows. Dermonecrotic toxins cleave the phosphodiester linkage between the phosphate and headgroup of certain phospholipids (sphingolipid and lysolipid substrates), forming an alcohol (often choline) and a cyclic phosphate. This toxin acts on sphingomyelin (SM) with high activity. It may also act on ceramide phosphoethanolamine (CPE), lysophosphatidylcholine (LPC) and lysophosphatidylethanolamine (LPE), but not on lysophosphatidylserine (LPS), and lysophosphatidylglycerol (LPG). It acts by transphosphatidylation, releasing exclusively cyclic phosphate products as second products. Shows high hemolytic activity. Induces dermonecrosis, vascular permeability, edema, inflammatory response, and platelet aggregation. Also shows cytotoxicity against renal epithelial cells. In addition, also induces hemolysis in a complement-dependent manner and probably also in a complement-independent manner. The hemolysis provoked in a complement-independent manner may be composed of several steps. The toxin may bind to erythrocyte membranes, may hydrolyze membrane phospholipids (SM and LPC) thus generating metabolism products that may cause hemolysis, probably by provoking an increase of calcium inside cells. The calcium influx may be due to the opening of L-type calcium channels, since L-type calcium channel blockers inhibit calcium influx. In vivo, is lethal to mice when intraperitoneally injected. In Loxosceles intermedia (Brown spider), this protein is Dermonecrotic toxin LiSicTox-alphaIA2aii.